The chain runs to 218 residues: Methylthioribulose-1-phosphate dehydratase (218 aa).

Zn(2+) contacts are provided by histidine 107 and histidine 109.

The protein belongs to the aldolase class II family. MtnB subfamily. Zn(2+) serves as cofactor.

The catalysed reaction is 5-(methylsulfanyl)-D-ribulose 1-phosphate = 5-methylsulfanyl-2,3-dioxopentyl phosphate + H2O. It participates in amino-acid biosynthesis; L-methionine biosynthesis via salvage pathway; L-methionine from S-methyl-5-thio-alpha-D-ribose 1-phosphate: step 2/6. Functionally, catalyzes the dehydration of methylthioribulose-1-phosphate (MTRu-1-P) into 2,3-diketo-5-methylthiopentyl-1-phosphate (DK-MTP-1-P). This is Methylthioribulose-1-phosphate dehydratase from Xylella fastidiosa (strain M12).